The chain runs to 269 residues: 4-hydroxy-tetrahydrodipicolinate reductase (269 aa).

NAD(+)-binding positions include 13 to 18 (GASGRM) and D39. R40 is an NADP(+) binding site. NAD(+) contacts are provided by residues 101-103 (GTT) and 125-128 (APNM). H158 serves as the catalytic Proton donor/acceptor. H159 serves as a coordination point for (S)-2,3,4,5-tetrahydrodipicolinate. Residue K162 is the Proton donor of the active site. (S)-2,3,4,5-tetrahydrodipicolinate is bound at residue 168–169 (GT).

It belongs to the DapB family.

The protein resides in the cytoplasm. It carries out the reaction (S)-2,3,4,5-tetrahydrodipicolinate + NAD(+) + H2O = (2S,4S)-4-hydroxy-2,3,4,5-tetrahydrodipicolinate + NADH + H(+). The catalysed reaction is (S)-2,3,4,5-tetrahydrodipicolinate + NADP(+) + H2O = (2S,4S)-4-hydroxy-2,3,4,5-tetrahydrodipicolinate + NADPH + H(+). The protein operates within amino-acid biosynthesis; L-lysine biosynthesis via DAP pathway; (S)-tetrahydrodipicolinate from L-aspartate: step 4/4. In terms of biological role, catalyzes the conversion of 4-hydroxy-tetrahydrodipicolinate (HTPA) to tetrahydrodipicolinate. The chain is 4-hydroxy-tetrahydrodipicolinate reductase from Bordetella bronchiseptica (strain ATCC BAA-588 / NCTC 13252 / RB50) (Alcaligenes bronchisepticus).